The chain runs to 219 residues: Octanoyltransferase (219 aa).

Residues 37 to 219 (EHSPDQLWIL…DFNDVQVILQ (183 aa)) form the BPL/LPL catalytic domain. Substrate is bound by residues 76–83 (RGGQVTWH), 143–145 (SLG), and 156–158 (GLA). The active-site Acyl-thioester intermediate is Cys174.

The protein belongs to the LipB family.

Its subcellular location is the cytoplasm. The catalysed reaction is octanoyl-[ACP] + L-lysyl-[protein] = N(6)-octanoyl-L-lysyl-[protein] + holo-[ACP] + H(+). It functions in the pathway protein modification; protein lipoylation via endogenous pathway; protein N(6)-(lipoyl)lysine from octanoyl-[acyl-carrier-protein]: step 1/2. In terms of biological role, catalyzes the transfer of endogenously produced octanoic acid from octanoyl-acyl-carrier-protein onto the lipoyl domains of lipoate-dependent enzymes. Lipoyl-ACP can also act as a substrate although octanoyl-ACP is likely to be the physiological substrate. The chain is Octanoyltransferase from Acinetobacter baylyi (strain ATCC 33305 / BD413 / ADP1).